An 89-amino-acid polypeptide reads, in one-letter code: Small ribosomal subunit protein uS15 (89 aa).

This sequence belongs to the universal ribosomal protein uS15 family. Part of the 30S ribosomal subunit. Forms a bridge to the 50S subunit in the 70S ribosome, contacting the 23S rRNA.

Functionally, one of the primary rRNA binding proteins, it binds directly to 16S rRNA where it helps nucleate assembly of the platform of the 30S subunit by binding and bridging several RNA helices of the 16S rRNA. In terms of biological role, forms an intersubunit bridge (bridge B4) with the 23S rRNA of the 50S subunit in the ribosome. The sequence is that of Small ribosomal subunit protein uS15 from Protochlamydia amoebophila (strain UWE25).